The primary structure comprises 223 residues: Agamous-like MADS-box protein AGL11 (223 aa).

Residues 1 to 61 (MGRGKIEIKR…GRVYEYSNNN (61 aa)) enclose the MADS-box domain. One can recognise a K-box domain in the interval 87–177 (AQYYQQESAK…RTKIAEVERL (91 aa)).

It localises to the nucleus. Functionally, probable transcription factor involved in seed development. In Vitis vinifera (Grape), this protein is Agamous-like MADS-box protein AGL11.